A 141-amino-acid polypeptide reads, in one-letter code: Small ribosomal subunit protein bS18c (141 aa).

Disordered regions lie at residues 14–55 and 120–141; these read EFIA…IKPG and IKRRESTARKKRKKGFRKRPKK. Pro residues predominate over residues 24-34; the sequence is PKAPLQPPLPP. A compositionally biased stretch (basic residues) spans 35 to 51; the sequence is SKRKGKPPKSPRRRSSR.

This sequence belongs to the bacterial ribosomal protein bS18 family. As to quaternary structure, part of the 30S ribosomal subunit.

It localises to the plastid. It is found in the chloroplast. The sequence is that of Small ribosomal subunit protein bS18c from Pelargonium hortorum (Common geranium).